A 356-amino-acid polypeptide reads, in one-letter code: Cobalt-precorrin-5B C(1)-methyltransferase (356 aa).

The protein belongs to the CbiD family.

The enzyme catalyses Co-precorrin-5B + S-adenosyl-L-methionine = Co-precorrin-6A + S-adenosyl-L-homocysteine. It participates in cofactor biosynthesis; adenosylcobalamin biosynthesis; cob(II)yrinate a,c-diamide from sirohydrochlorin (anaerobic route): step 6/10. In terms of biological role, catalyzes the methylation of C-1 in cobalt-precorrin-5B to form cobalt-precorrin-6A. In Citrifermentans bemidjiense (strain ATCC BAA-1014 / DSM 16622 / JCM 12645 / Bem) (Geobacter bemidjiensis), this protein is Cobalt-precorrin-5B C(1)-methyltransferase.